The chain runs to 883 residues: Phycobiliprotein ApcE (883 aa).

C181 lines the (2R,3E)-phycocyanobilin pocket. PBS-linker domains are found at residues S238–T418, S488–L669, and R684–K861.

This sequence belongs to the phycobilisome linker protein family. Contains one covalently linked bilin chromophore. This protein autochromophorylates (Potential).

The protein localises to the plastid. It is found in the cyanelle thylakoid membrane. Functionally, this protein is postulated to act both as terminal energy acceptor and as a linker polypeptide that stabilizes the phycobilisome architecture. May have intrinsic bilin lyase activity. The protein is Phycobiliprotein ApcE (apcE) of Cyanophora paradoxa.